Reading from the N-terminus, the 271-residue chain is MQYWGKIIGVAVALLMGGGFWGVVLGLLIGHMFDKARSRKMAWFANQRERQALFFATTFEVMGHLTKSKGRVTEADIHIASQLMDRMNLHGASRTAAQNAFRVGKSDNYPLREKMRQFRSVCFGRFDLIRMFLEIQIQAAFADGSLHPNERAVLYVIAEELGISRAQFDQFLRMMQGGAQFGGGYQQQTGGGNWQQAQRGPTLEDACNVLGVKPTDDATTIKRAYRKLMSEHHPDKLVAKGLPPEMMEMAKQKAQEIQQAYELIKQQKGFK.

At 1 to 6 (MQYWGK) the chain is on the periplasmic side. A helical membrane pass occupies residues 7-31 (IIGVAVALLMGGGFWGVVLGLLIGH). Topologically, residues 32–271 (MFDKARSRKM…ELIKQQKGFK (240 aa)) are cytoplasmic. A J domain is found at 205–271 (DACNVLGVKP…ELIKQQKGFK (67 aa)).

Homodimer.

It localises to the cell inner membrane. In terms of biological role, regulatory DnaK co-chaperone. Direct interaction between DnaK and DjlA is needed for the induction of the wcaABCDE operon, involved in the synthesis of a colanic acid polysaccharide capsule, possibly through activation of the RcsB/RcsC phosphotransfer signaling pathway. The colanic acid capsule may help the bacterium survive conditions outside the host. This chain is Co-chaperone protein DjlA, found in Escherichia coli (strain K12).